Consider the following 600-residue polypeptide: uncharacterized protein (600 aa).

4Fe-4S ferredoxin-type domains follow at residues 14-44 and 53-82; these read RLAI…MGEK and GKPV…IIGL. ABC transporter domains lie at 77–318 and 348–563; these read ISII…YLYG and LLSY…LKEM. ATP is bound by residues 117–124 and 380–387; these read GQNGIGKS and GPNGIGKT. Residues 569–594 show a composition bias toward basic and acidic residues; the sequence is RDPETGRPRANKEGSQRDIMQKEKGE. The disordered stretch occupies residues 569-600; it reads RDPETGRPRANKEGSQRDIMQKEKGEYYYVDE.

It belongs to the ABC transporter superfamily.

This is an uncharacterized protein from Methanocaldococcus jannaschii (strain ATCC 43067 / DSM 2661 / JAL-1 / JCM 10045 / NBRC 100440) (Methanococcus jannaschii).